Reading from the N-terminus, the 703-residue chain is MSSDLVMPALGRPFTLGMLYDARREKLIPGFSLFGDETLQKYQSSNAQRSSEFKIVASDSTESKSSAMDIEASLGVSFLGGLVEVGGSAKYLNNTKKYQNQSRVTLKYKATTVYKQFTAPPGTVTVQETAITEKGLATHVVTSILYGANAFFVSDSDKVEDTNLQDIQGKMEAAIKKIPTISIEGSASVQLTDEEKSLASNLSCKFHGDFLLESLPTTFEDAVKTYQTLPTLIGEDGANSVPMKVWLAPLKSYNSKAQQLIQEINVSKVRRIHTTLEELHKLKRRANEAMDVKLVQRIPLIHDKISNFQQIFQDYMLTVQKKIAEKLPLVRAGTESEQSLQKIIDDRAQSPFSNEKVSKWLDAVEREIAVLKSCAGMVEGTQAKFVSNQTELDREVLVGKVKHAVCFIFTSVERNDPYLKVLSDYWESPPSNNAKDVAPSTEDKWCFSTEVVLKMQQRAQTFCDHVNDFEKSRNVGFFITALENGKFQGASIYYYKEGSLATQDFTFPRMPFVQGYKKRSDLLWYACDLTFDRNTINNWISLSDNDTFAASEHGKRQNYPKHPERFVSFNQVLCNEGLMGKHYWEVEWNGYIDVGIAYISIPRKEIDFASAFGYNTYSWVLSYNPKIGYIERHKKREYNVRAPNPGFKRLGLFLDWRYGSISFYAVSSDEVHHLHTFKTKFTEPVYPAFSIGPAGNHGTLRLL.

The tract at residues 2–265 (SSDLVMPALG…KAQQLIQEIN (264 aa)) is structural MACPF/CDC pore-forming domain. Positions 266-385 (VSKVRRIHTT…GMVEGTQAKF (120 aa)) are structural FAT domain. Positions 386-517 (VSNQTELDRE…PRMPFVQGYK (132 aa)) are thioredoxin (THX) domain. The region spanning 508–703 (PRMPFVQGYK…AGNHGTLRLL (196 aa)) is the B30.2/SPRY domain.

Belongs to the SNTX/VTX toxin family. In terms of assembly, heterodimer of alpha and beta subunits; non-covalently linked. In terms of processing, intrachain disulfide bonds may be present in the heterodimer. Post-translationally, not glycosylated. As to expression, expressed by the venom gland.

The protein resides in the secreted. Its function is as follows. This lethal (towards mammals) heterodimer induces hemolytic activities due to its ability to form pores in the cell membrane. The pore may be composed of 10 SNTX-alpha/beta heterodimers. The toxin elicits potent hypotension which is endothelium-dependent and appears to be mediated by the nitric oxide pathway and activation of potassium channels. In addition, it displays edema-inducing activities, increases vascular permeability. It also shows myotoxic activities and interferes irreversibly with neuromuscular function. It also induces irreversible platelet aggregation in rabbit or rat (but not in human or mouse) whole blood. In addition, it has been observed to increase spontaneous quantal acetylcholine release from isolated frog cutaneous pectoris motor endings. The chain is Stonustoxin subunit alpha from Synanceia horrida (Estuarine stonefish).